A 557-amino-acid chain; its full sequence is MKAILRASRIGRVILRYRLDALLEGTPAERWLRLAKPFVPRASAEIAAQSRGARLRLALQELGPIFVKFGQILSTRRDLIPADVAEELTLLQDRVKPFDGQAARLIVEAALGLPVSVAFASFDTVPLASASIAQVHAATLPPDANGVRREVVVKVLRPDIERQIDADIALLHSLATLVERTHPRADKIRPREVVAEIEGTLAAELDLQREGANASVLRRFWEGSDDLYVPEVIWSHTAERALTLERVYGIPSDDIAKLDAAGIDRKALAAKGVRVFYTQVFRDNFFHADAHAGNIWVDSDPERRLNPRFIALDFGIMGQLSQEDQYYLAENFMAIFHKDYRRMAELHVEAGWMPSNVRIDELEAAARSVCEPYFTRPLSEISLAQVLIKLFRVAQRYELTLQPQLILLQKTLLNIEGVGRQLDPKLDIWAVARPVLERILRERYSPRRVLRELGKRLPEIMTHAPDMPRLVHSWLKQQVEGRHQIDIRSPELLALDLSLRKLQTRVVTAITGSGLLVVAAVLYGLHPDGWYLGTVPVWSWISGGAGSAALLVAWLRR.

The 389-residue stretch at 121–509 (SFDTVPLASA…RKLQTRVVTA (389 aa)) folds into the Protein kinase domain. ATP-binding positions include 127-135 (LASASIAQV) and Lys-154. The Proton acceptor role is filled by Asp-289. Transmembrane regions (helical) follow at residues 506–526 (VVTAITGSGLLVVAAVLYGLH) and 535–555 (VPVWSWISGGAGSAALLVAWL).

Belongs to the ABC1 family. UbiB subfamily.

The protein resides in the cell inner membrane. Its pathway is cofactor biosynthesis; ubiquinone biosynthesis [regulation]. Its function is as follows. Is probably a protein kinase regulator of UbiI activity which is involved in aerobic coenzyme Q (ubiquinone) biosynthesis. This is Probable protein kinase UbiB from Xanthomonas euvesicatoria pv. vesicatoria (strain 85-10) (Xanthomonas campestris pv. vesicatoria).